We begin with the raw amino-acid sequence, 203 residues long: Apoptosis-associated speck-like protein containing a CARD (203 aa).

The Pyrin domain occupies 1–91 (MAESFKEHLQ…DDLLRNTGQS (91 aa)). The 92-residue stretch at 112 to 203 (VAFSKVNFID…FLMDDLEDAE (92 aa)) folds into the CARD domain.

Self-associates (via pyrin and CARD domains). Interacts (via pyrin domain) with caspa (via pyrin domain). Interacts with caspb; the interaction only occurs in the presence of nlrp1. Component of NLRP1 inflammasomes. Inflammasomes are supramolecular complexes that assemble in the cytosol in response to pathogens and other damage-associated signals and play critical roles in innate immunity and inflammation. The NLRP1 inflammasome is composed of the signal sensor nlrp1, and the adapter pycard (asc), which recruit effector pro-inflammatory caspases caspa and/or caspb. The interaction between nlrp1 and pycard is required for the sequential recruitment of caspa and then caspb. Within the complex caspa is preferentially recruited first and this causes the cleavage of pro-il1b into the midformed il1b. This is followed by the recruitment of caspb, which is activated and cleaves the midformed il1b resulting in il1b maturation. Interacts (via pyrin domain) with NLP3X1 (via pyrin domain). Interacts with gbp4. As to expression, expressed in the kidney, intestine and gill. Expressed at low levels in the heart.

Its subcellular location is the cytoplasm. It is found in the inflammasome. Functions as a key mediator in apoptosis and inflammation. Promotes caspase-mediated apoptosis. Induces proteolytic processing of caspa and caspa-dependent apoptosis. Involved in innate immune response by acting as an integral adapter in the assembly of various inflammasomes which recruit and activate caspase-1 leading to processing and secretion of pro-inflammatory cytokines. Caspase-1-dependent inflammation leads to macrophage pyroptosis, a form of cell death. The function as activating adapter in different types of inflammasomes is mediated by the pyrin and CARD domains and their homotypic interactions. Clustered PYCARD nucleates the formation of caspase-1 filaments through the interaction of their respective CARD domains, acting as a platform for of caspase-1 polymerization. Also involved in transcriptional activation of cytokines and chemokines independent of the inflammasome. This Danio rerio (Zebrafish) protein is Apoptosis-associated speck-like protein containing a CARD (pycard).